Consider the following 349-residue polypeptide: Protein O-mannose kinase (349 aa).

The Cytoplasmic portion of the chain corresponds to 1–19 (MGQQHGARNGLTHRELPRG). A helical; Signal-anchor for type II membrane protein transmembrane segment spans residues 20 to 42 (MGLLLAMALMNVVLYVCLDHLFI). Residues 43-349 (SPGRATEDPR…TVMSQTKEML (307 aa)) lie on the Lumenal side of the membrane. 3 N-linked (GlcNAc...) asparagine glycosylation sites follow: N66, N164, and N219. The region spanning 80–349 (VRQLKLVGEG…TVMSQTKEML (270 aa)) is the Protein kinase domain.

It belongs to the protein kinase superfamily. Ser/Thr protein kinase family. STKL subfamily.

It is found in the endoplasmic reticulum membrane. The catalysed reaction is 3-O-[beta-D-GalNAc-(1-&gt;3)-beta-D-GlcNAc-(1-&gt;4)-alpha-D-Man]-L-Thr-[protein] + ATP = 3-O-[beta-D-GalNAc-(1-&gt;3)-beta-D-GlcNAc-(1-&gt;4)-(O-6-P-alpha-D-Man)]-Thr-[protein] + ADP + H(+). In terms of biological role, protein O-mannose kinase that specifically mediates phosphorylation at the 6-position of an O-mannose of the trisaccharide (N-acetylgalactosamine (GalNAc)-beta-1,3-N-acetylglucosamine (GlcNAc)-beta-1,4-mannose) to generate phosphorylated O-mannosyl trisaccharide (N-acetylgalactosamine-beta-1,3-N-acetylglucosamine-beta-1,4-(phosphate-6-)mannose). Phosphorylated O-mannosyl trisaccharide is a carbohydrate structure present in alpha-dystroglycan (DAG1), which is required for binding laminin G-like domain-containing extracellular proteins with high affinity. Only shows kinase activity when the GalNAc-beta-3-GlcNAc-beta-terminus is linked to the 4-position of O-mannose, suggesting that this disaccharide serves as the substrate recognition motif. The protein is Protein O-mannose kinase (Pomk) of Rattus norvegicus (Rat).